We begin with the raw amino-acid sequence, 167 residues long: HTH-type transcriptional repressor IacR (167 aa).

Over residues 1-10 (MSNAKNTSAA) the composition is skewed to polar residues. The segment at 1–25 (MSNAKNTSAASPARKGHSHHDPASD) is disordered. An HTH marR-type domain is found at 30–162 (EDFPFYWLAR…LNRMLEVVFH (133 aa)). The segment at residues 76–99 (ISEISTHAIAKLSTITKIVYRMKE) is a DNA-binding region (H-T-H motif).

Its activity is regulated as follows. Exposure to indole-3-acetic acid (IAA) probably relieves the repressor activity. Functionally, probably acts as a repressor of iacA expression. The protein is HTH-type transcriptional repressor IacR of Pseudomonas putida (Arthrobacter siderocapsulatus).